Here is a 226-residue protein sequence, read N- to C-terminus: Ribose-5-phosphate isomerase A (226 aa).

Substrate contacts are provided by residues 29 to 32 (TGST), 84 to 87 (DGAD), and 97 to 100 (KGGG). The Proton acceptor role is filled by E106. Position 124 (K124) interacts with substrate.

This sequence belongs to the ribose 5-phosphate isomerase family. Homodimer.

The catalysed reaction is aldehydo-D-ribose 5-phosphate = D-ribulose 5-phosphate. It functions in the pathway carbohydrate degradation; pentose phosphate pathway; D-ribose 5-phosphate from D-ribulose 5-phosphate (non-oxidative stage): step 1/1. In terms of biological role, catalyzes the reversible conversion of ribose-5-phosphate to ribulose 5-phosphate. This chain is Ribose-5-phosphate isomerase A, found in Methanothermobacter thermautotrophicus (strain ATCC 29096 / DSM 1053 / JCM 10044 / NBRC 100330 / Delta H) (Methanobacterium thermoautotrophicum).